Here is a 435-residue protein sequence, read N- to C-terminus: Cyclic GMP-AMP synthase-like receptor (435 aa).

Residues Ser-70 and Glu-82–Asp-84 each bind ATP. 3 residues coordinate Mg(2+): Glu-82, Asp-84, and Asp-209. GTP is bound at residue Asp-209. ATP-binding positions include Lys-286 and Ser-300–Lys-304. Mn(2+) is bound by residues Leu-311, Asp-312, and Asp-317.

The protein belongs to the mab-21 family. The cofactor is Mg(2+). Mn(2+) is required as a cofactor.

It carries out the reaction GTP + ATP = 2',3'-cGAMP + 2 diphosphate. The catalysed reaction is GTP + ATP = pppGp(2'-5')A + diphosphate. The enzyme catalyses pppGp(2'-5')A = 2',3'-cGAMP + diphosphate. In terms of biological role, nucleotidyltransferase that catalyzes the formation of cyclic GMP-AMP (2',3'-cGAMP) from ATP and GTP and plays a key role in innate immunity. Directly binds some unknown ligand, activating the nucleotidyltransferase activity, leading to synthesis of 2',3'-cGAMP, a second messenger that binds to and activates Sting, thereby triggering the immune response via activation of the NF-kappa-B transcription factor. The chain is Cyclic GMP-AMP synthase-like receptor from Ctenocephalides felis (Cat flea).